A 356-amino-acid chain; its full sequence is Nicotinate-nucleotide--dimethylbenzimidazole phosphoribosyltransferase (356 aa).

Residue Glu-317 is the Proton acceptor of the active site.

The protein belongs to the CobT family. As to quaternary structure, homodimer.

It carries out the reaction 5,6-dimethylbenzimidazole + nicotinate beta-D-ribonucleotide = alpha-ribazole 5'-phosphate + nicotinate + H(+). Its pathway is nucleoside biosynthesis; alpha-ribazole biosynthesis; alpha-ribazole from 5,6-dimethylbenzimidazole: step 1/2. Its function is as follows. Catalyzes the synthesis of alpha-ribazole-5'-phosphate from nicotinate mononucleotide (NAMN) and 5,6-dimethylbenzimidazole (DMB). The protein is Nicotinate-nucleotide--dimethylbenzimidazole phosphoribosyltransferase of Salmonella typhi.